The primary structure comprises 605 residues: Ubiquitin carboxyl-terminal hydrolase 2 (605 aa).

The interval 1-200 (MSQLSSTLKR…CPEYLVDYLE (200 aa)) is necessary for interaction with MDM4. Disordered regions lie at residues 71-107 (LLDY…GSGL) and 237-264 (WETG…KSAQ). The segment covering 90-100 (KRAESQTRGTE) has biased composition (basic and acidic residues). Positions 245–255 (PGPSRSSSPGR) are enriched in low complexity. Positions 267–599 (AGLRNLGNTC…DAYLLFYELA (333 aa)) constitute a USP domain. The active-site Nucleophile is cysteine 276. A necessary for interaction with MDM4 region spans residues 403 to 503 (YLEREDSRIG…FPKILVLHLK (101 aa)). Residues cysteine 425, cysteine 428, cysteine 476, and cysteine 479 each coordinate Zn(2+). The active-site Proton acceptor is the histidine 557.

It belongs to the peptidase C19 family. USP2 subfamily. In terms of assembly, homooligomer. Found in trimeric complex with MDM2 and MDM4 and USP2. Interacts with CCND1; the interaction is direct and promotes its stabilization by antagonizing ubiquitin-dependent degradation. Interacts (via N-terminus and C-terminus) with MDM2. Interacts with MDM4. Interacts with PER1. Interacts with KCNQ1; counteracts the NEDD4L-specific down-regulation of I(Ks) and restore plasma membrane localization of KCNQ1. Isoform 4: Interacts with NHERF4 and CLTC. In terms of tissue distribution, expressed in mesangial cells of the kidney and in different types of glomerulonephritides (at protein level).

Its subcellular location is the cytoplasm. It is found in the perinuclear region. It localises to the nucleus. The protein resides in the membrane. It carries out the reaction Thiol-dependent hydrolysis of ester, thioester, amide, peptide and isopeptide bonds formed by the C-terminal Gly of ubiquitin (a 76-residue protein attached to proteins as an intracellular targeting signal).. Cleavage is inhibited by ubiquitin in a dosage-dependent manner. Cleavage is blocked by ubiquitin aldehyde. Functionally, hydrolase that deubiquitinates polyubiquitinated target proteins such as MDM2, MDM4 and CCND1. Isoform 1 and isoform 4 possess both ubiquitin-specific peptidase and isopeptidase activities. Deubiquitinates MDM2 without reversing MDM2-mediated p53/TP53 ubiquitination and thus indirectly promotes p53/TP53 degradation and limits p53 activity. Has no deubiquitinase activity against p53/TP53. Prevents MDM2-mediated degradation of MDM4. Plays a role in the G1/S cell-cycle progression in normal and cancer cells. Regulates the circadian clock by modulating its intrinsic circadian rhythm and its capacity to respond to external cues. Associates with clock proteins and deubiquitinates core clock component PER1 but does not affect its overall stability. Regulates the nucleocytoplasmic shuttling and nuclear retention of PER1 and its repressive role on the clock transcription factors CLOCK and BMAL1. Plays a role in the regulation of myogenic differentiation of embryonic muscle cells. Its function is as follows. Circadian clock output effector that regulates Ca(2+) absorption in the small intestine. Probably functions by regulating protein levels of the membrane scaffold protein NHERF4 in a rhythmic manner, and is therefore likely to control Ca(2+) membrane permeability mediated by the Ca(2+) channel TRPV6 in the intestine. This is Ubiquitin carboxyl-terminal hydrolase 2 (USP2) from Homo sapiens (Human).